Reading from the N-terminus, the 507-residue chain is Maturase K (507 aa).

The protein belongs to the intron maturase 2 family. MatK subfamily.

The protein localises to the plastid. Its subcellular location is the chloroplast. Its function is as follows. Usually encoded in the trnK tRNA gene intron. Probably assists in splicing its own and other chloroplast group II introns. The chain is Maturase K from Lyonia ligustrina (Maleberry).